Here is a 55-residue protein sequence, read N- to C-terminus: Beta-toxin Cn7 (55 aa).

An LCN-type CS-alpha/beta domain is found at 1 to 55; sequence KEGYIVNYHDGCKYECYKLGDNDYCLRECKLRVGKGAGGYCYAFACWCTHLYEQA. Intrachain disulfides connect Cys16–Cys41, Cys25–Cys46, and Cys29–Cys48.

The protein belongs to the long (3 C-C) scorpion toxin superfamily. Sodium channel inhibitor family. Beta subfamily. In terms of tissue distribution, expressed by the venom gland.

It localises to the secreted. Functionally, beta toxins bind voltage-independently at site-4 of sodium channels (Nav) and shift the voltage of activation toward more negative potentials thereby affecting sodium channel activation and promoting spontaneous and repetitive firing. In Centruroides noxius (Mexican scorpion), this protein is Beta-toxin Cn7.